The chain runs to 519 residues: MATTSTTGSTLLQPLSNAVQLPIDQVNFVVCQLFALLAAVWFRTYLHSSKTSSFIRHVVATLLGLYLAFFCFGWYALHFLVQSGISYCIMIIAGVESMHQCCFVFALGYLSVCQITRVYIFDYGQYSADFSGPMMIITQKITSLAYEIHDGMFRKDEELTPSQRGLAVRRMPSLLEYVSYTCNFMGILAGPLCSYKDYIAFIEGRASHMAQSGENGKEEQHGKAEPSPNAAVTEKLLVCGLSLLFHLTISSMLPVEYNIDEHFQATASWPTKATYLYVSLLAARPKYYFAWTLADAINNAAGFGFRGYDKNGVARWDLISNLRIQQIEMSTSFKMFLDNWNIQTALWLKRVCYERATFSPTVQTFFLSAIWHGVYPGYYLTFLTGVLMTLAARAVRNNFRHYFVEPPQLKLFYDIITWAATQITISYTVVPFVLLSINPSFTFYRSWYYCLHICSILVLLLLPVKKSPRKKNTEENAQPSWAKKFDERENSLGQNSFSMMNNVCNQNQDTGSRHSALTQ.

6 helical membrane passes run 22 to 42 (PIDQVNFVVCQLFALLAAVWF), 61 to 81 (TLLGLYLAFFCFGWYALHFLV), 88 to 108 (CIMIIAGVESMHQCCFVFALG), 184 to 204 (FMGILAGPLCSYKDYIAFIEG), 236 to 256 (LLVCGLSLLFHLTISSMLPVE), and 288 to 305 (YFAWTLADAINNAAGFGF). Active-site residues include N341 and H372. The next 3 helical transmembrane spans lie at 365–385 (FFLSAIWHGVYPGYYLTFLTG), 415–435 (IITWAATQITISYTVVPFVLL), and 443–463 (FYRSWYYCLHICSILVLLLLP).

The protein belongs to the membrane-bound acyltransferase family.

Its subcellular location is the endoplasmic reticulum membrane. The catalysed reaction is a 1-acyl-sn-glycero-3-phosphocholine + an acyl-CoA = a 1,2-diacyl-sn-glycero-3-phosphocholine + CoA. It carries out the reaction a 1-acyl-sn-glycero-3-phosphoethanolamine + an acyl-CoA = a 1,2-diacyl-sn-glycero-3-phosphoethanolamine + CoA. The enzyme catalyses a 1-acyl-sn-glycero-3-phosphate + an acyl-CoA = a 1,2-diacyl-sn-glycero-3-phosphate + CoA. It catalyses the reaction (9Z)-hexadecenoyl-CoA + 1-hexadecanoyl-sn-glycero-3-phosphocholine = 1-hexadecanoyl-2-(9Z-hexadecenoyl)-sn-glycero-3-phosphocholine + CoA. The catalysed reaction is 1-hexadecanoyl-sn-glycero-3-phosphoethanolamine + (9Z)-octadecenoyl-CoA = 1-hexadecanoyl-2-(9Z-octadecenoyl)-sn-glycero-3-phosphoethanolamine + CoA. It carries out the reaction 1-hexadecanoyl-sn-glycero-3-phosphoethanolamine + (9Z)-hexadecenoyl-CoA = 1-hexadecanoyl-2-(9Z)-hexadecenoyl-sn-glycero-3-phosphoethanolamine + CoA. The enzyme catalyses 1-(9Z-octadecenoyl)-sn-glycero-3-phospho-L-serine + hexadecanoyl-CoA = 1-(9Z)-octadecenoyl-2-hexadecanoyl-sn-glycero-3-phosphoserine + CoA. It catalyses the reaction (9Z,12Z)-octadecadienoyl-CoA + 1-hexadecanoyl-sn-glycero-3-phosphocholine = 1-hexadecanoyl-2-(9Z,12Z-octadecadienoyl)-sn-glycero-3-phosphocholine + CoA. The catalysed reaction is 1-hexadecanoyl-sn-glycero-3-phosphocholine + (9Z)-octadecenoyl-CoA = 1-hexadecanoyl-2-(9Z-octadecenoyl)-sn-glycero-3-phosphocholine + CoA. It carries out the reaction 1-hexadecanoyl-sn-glycero-3-phosphate + (9Z)-hexadecenoyl-CoA = 1-hexadecanoyl-2-[(9Z)-hexadec-9-enoyl]-sn-glycero-3-phosphate + CoA. The enzyme catalyses 1-hexadecanoyl-sn-glycero-3-phosphate + (9Z)-octadecenoyl-CoA = 1-hexadecanoyl-2-(9Z-octadecenoyl)-sn-glycero-3-phosphate + CoA. It catalyses the reaction a 1-O-(1Z-alkenyl)-sn-glycero-3-phosphocholine + (9Z)-octadecenoyl-CoA = 1-O-(1Z)-alkenyl-2-(9Z)-octadecenoyl-sn-glycero-3-phosphocholine + CoA. The catalysed reaction is a 1-O-(1Z-alkenyl)-sn-glycero-3-phosphoethanolamine + (9Z)-octadecenoyl-CoA = 1-O-(1Z)-alkenyl-2-(9Z)-octadecenoyl-sn-glycero-3-phosphoethanolamine + CoA. It carries out the reaction 1-octadecanoyl-sn-glycero-3-phosphoethanolamine + (9Z)-octadecenoyl-CoA = 1-octadecanoyl-2-(9Z-octadecenoyl)-sn-glycero-3-phosphoethanolamine + CoA. The enzyme catalyses 1-octadecanoyl-sn-glycero-3-phosphocholine + (9Z)-octadecenoyl-CoA = 1-octadecanoyl-2-(9Z-octadecenoyl)-sn-glycero-3-phosphocholine + CoA. It catalyses the reaction 1-(9Z-octadecenoyl)-sn-glycero-3-phosphoethanolamine + (9Z)-octadecenoyl-CoA = 1,2-di-(9Z-octadecenoyl)-sn-glycero-3-phosphoethanolamine + CoA. It functions in the pathway lipid metabolism; phospholipid metabolism. With respect to regulation, partially inhibited by thimerosal. Its function is as follows. Acyltransferase which catalyzes the transfer of an acyl group from an acyl-CoA to a lysophospholipid leading to the production of a phospholipid and participates in the reacylation step of the phospholipid remodeling pathway also known as the Lands cycle. May catalyze preferentially the acylation of lysophosphatidylethanolamine (1-acyl-sn-glycero-3-phosphoethanolamine or LPE) and lysophosphatidic acid (LPA) and to a lesser extend lysophosphatidylcholine (LPC) and lysophosphatidylserine (LPS). Prefers oleoyl-CoA as the acyl donor. May be involved in chondrocyte differentiation. The polypeptide is Membrane-bound glycerophospholipid O-acyltransferase 2 (Rattus norvegicus (Rat)).